The chain runs to 280 residues: Bis(5'-nucleosyl)-tetraphosphatase, symmetrical (280 aa).

This sequence belongs to the Ap4A hydrolase family.

It carries out the reaction P(1),P(4)-bis(5'-adenosyl) tetraphosphate + H2O = 2 ADP + 2 H(+). In terms of biological role, hydrolyzes diadenosine 5',5'''-P1,P4-tetraphosphate to yield ADP. In Shigella boydii serotype 18 (strain CDC 3083-94 / BS512), this protein is Bis(5'-nucleosyl)-tetraphosphatase, symmetrical.